A 926-amino-acid polypeptide reads, in one-letter code: ABC transporter A family member 6 (926 aa).

6 consecutive transmembrane segments (helical) span residues L34 to S54, A336 to L356, F389 to L409, T418 to V438, V451 to I471, and D525 to I545. One can recognise an ABC transporter domain in the interval I610–T847. An ATP-binding site is contributed by G648–T655.

The protein belongs to the ABC transporter superfamily. ABCA family. CPR flippase (TC 3.A.1.211) subfamily.

The protein resides in the membrane. This chain is ABC transporter A family member 6 (ABCA6), found in Arabidopsis thaliana (Mouse-ear cress).